Consider the following 330-residue polypeptide: Protein FAM170A (330 aa).

Disordered stretches follow at residues 1–54, 76–104, and 169–218; these read MKRR…VTST, HRDS…HVSL, and VGTP…AKTP. Over residues 174–185 the composition is skewed to polar residues; that stretch reads SDVSTRNLLSDS. Residues 189–200 show a composition bias toward basic and acidic residues; sequence GEEKEHEERTES. Thr217 is modified (phosphothreonine). The C2H2-type; degenerate zinc finger occupies 228–252; it reads FRCMACCRVFTTMEALQEHVQFGIR. Residues 270–330 form a disordered region; sequence NMESESTQDE…VFHSPKDRNS (61 aa). Residues 275–293 are compositionally biased toward acidic residues; sequence STQDEQEEENGNEKEEEEK. The residue at position 315 (Ser315) is a Phosphoserine.

The protein belongs to the FAM170 family. In terms of tissue distribution, expressed strongly in testis and brain and weakly in prostate, spleen, pancreas and uterus.

Its subcellular location is the nucleus. Its function is as follows. Acts as a nuclear transcription factor that positively regulates the expression of heat shock genes. Binds to heat shock promoter elements (HSE). In Homo sapiens (Human), this protein is Protein FAM170A (FAM170A).